The following is a 91-amino-acid chain: Beta-microseminoprotein (91 aa).

Cystine bridges form between Cys2–Cys54, Cys22–Cys46, Cys41–Cys75, Cys44–Cys53, and Cys68–Cys88.

In terms of tissue distribution, expressed in ciliated epithelium of nidamental gland and in secretory-like cells in accessory nidamental gland (at protein level). Expressed in ovary, nidamental gland and accessory nidamental gland.

Its subcellular location is the secreted. Its function is as follows. Acts as a pheromone. Triggers aggressive behaviors in males such as fin beating, lunging and grabbing. These behaviors form part of the competition for fertile females. The polypeptide is Beta-microseminoprotein (Doryteuthis pealeii (Longfin inshore squid)).